A 127-amino-acid polypeptide reads, in one-letter code: Protein FAM229A (127 aa).

The tract at residues 1-96 (MLPSSTPGPG…ATEHNPVRPL (96 aa)) is disordered. Residues 24 to 39 (RSPAARAPAAASSLGP) show a composition bias toward low complexity.

This sequence belongs to the FAM229 family.

The sequence is that of Protein FAM229A (FAM229A) from Homo sapiens (Human).